A 419-amino-acid polypeptide reads, in one-letter code: Tyrosine--tRNA ligase (419 aa).

Tyrosine 34 lines the L-tyrosine pocket. Positions 39–48 (PTADSLHLGN) match the 'HIGH' region motif. The L-tyrosine site is built by tyrosine 169 and glutamine 173. The 'KMSKS' region motif lies at 229 to 233 (KFGKS). Lysine 232 is an ATP binding site. Residues 353–419 (LTLVELLISA…GKKKNFVLTY (67 aa)) form the S4 RNA-binding domain.

The protein belongs to the class-I aminoacyl-tRNA synthetase family. TyrS type 1 subfamily. As to quaternary structure, homodimer.

It localises to the cytoplasm. It catalyses the reaction tRNA(Tyr) + L-tyrosine + ATP = L-tyrosyl-tRNA(Tyr) + AMP + diphosphate + H(+). Its function is as follows. Catalyzes the attachment of tyrosine to tRNA(Tyr) in a two-step reaction: tyrosine is first activated by ATP to form Tyr-AMP and then transferred to the acceptor end of tRNA(Tyr). The protein is Tyrosine--tRNA ligase of Lactococcus lactis subsp. lactis (strain IL1403) (Streptococcus lactis).